The following is a 153-amino-acid chain: Aspartate carbamoyltransferase regulatory chain (153 aa).

Residues Cys-109, Cys-114, Cys-138, and Cys-141 each contribute to the Zn(2+) site.

The protein belongs to the PyrI family. In terms of assembly, contains catalytic and regulatory chains. Zn(2+) is required as a cofactor.

In terms of biological role, involved in allosteric regulation of aspartate carbamoyltransferase. The protein is Aspartate carbamoyltransferase regulatory chain of Salmonella schwarzengrund (strain CVM19633).